The sequence spans 133 residues: uncharacterized protein (133 aa).

A run of 2 helical transmembrane segments spans residues 8–28 (MVLLLLLLLLLLLLLLLLLLL) and 46–66 (SFSILFLVSFSIGTFFSSIGA).

It localises to the membrane. This is an uncharacterized protein from Saccharomyces cerevisiae (strain ATCC 204508 / S288c) (Baker's yeast).